The following is a 568-amino-acid chain: Estrogen receptor beta-1 (568 aa).

The interval 12-169 (SEYAEGDSSL…SLRGKADMHY (158 aa)) is modulating. 2 consecutive NR C4-type zinc fingers follow at residues 170–190 (CAVC…CEGC) and 206–230 (CPAT…LRKC). The nuclear receptor DNA-binding region spans 170 to 235 (CAVCSDYASG…RLRKCYEVGM (66 aa)). An NR LBD domain is found at 292-528 (SPEELIARIM…DLLLEMLDAH (237 aa)).

It belongs to the nuclear hormone receptor family. NR3 subfamily. As to quaternary structure, binds DNA as a homodimer. Can form a heterodimer with ER-alpha.

It localises to the nucleus. Functionally, binds estrogens with an affinity similar to that of ER-alpha, and activates expression of reporter genes containing estrogen response elements (ERE) in an estrogen-dependent manner. In Carassius auratus (Goldfish), this protein is Estrogen receptor beta-1 (esr2a).